The sequence spans 163 residues: MISTPEPLHAGHILTPFCCGVDSIDNWLKQRAMKNQTTGASRTFVCCGSDSNVLAYYSLASSAVTTNTSPGRFRRNMPDPIPVVVLGRLAVDKSLHGQGVARALVRDAGLRVIQVAETIGIRGMLVHALSDEAREFYQRVGFVPSPMDPMMLMVTLGDLVESV.

The active site involves Y137.

This sequence belongs to the acetyltransferase family. GNAT subfamily. Homodimer. Forms a complex with cognate antitoxin TacA2.

The catalysed reaction is glycyl-tRNA(Gly) + acetyl-CoA = N-acetylglycyl-tRNA(Gly) + CoA + H(+). The enzyme catalyses L-isoleucyl-tRNA(Ile) + acetyl-CoA = N-acetyl-L-isoleucyl-tRNA(Ile) + CoA + H(+). It carries out the reaction L-leucyl-tRNA(Leu) + acetyl-CoA = N-acetyl-L-leucyl-tRNA(Leu) + CoA + H(+). Its function is as follows. Toxic component of a type II toxin-antitoxin (TA) system. Acetylates tRNA and inhibits translation. Acetylates mainly Gly and Ile/Leu in vitro. Overexpression during the lag phase of a tacA2-tacT2 deletion strain leads to a 100-fold increase in persister cells in the presence of cefotaxime and a non-growth state in the absence of antibiotic. This protein, which has a single amino acid compared to S.typhimurium strain 14028s (Lys-29 is Glu in 14028s), produces 100-fold more persister cells, has much higher acetylation activity and binds tRNA much better. Persister cell formation and the growth defect are neutralized by cognate antitoxin TacA2. In terms of biological role, the TacA2-TacT2 complex both represses and derepresses expression of its own operon. This is tRNA-acetylating toxin 2 from Salmonella enteritidis.